The chain runs to 39 residues: LVSVEHQAARLKVAKAQQLAAQLPAMCRLEGGDALSASQ.

It belongs to the gliadin/glutenin family. In terms of assembly, disulfide-bridge linked aggregates.

Glutenins are high-molecular weight seed storage proteins of wheat endosperm. Thought to be responsible for the visco-elastic property of wheat dough. This is Glutenin, high molecular weight subunit PC237 from Triticum aestivum (Wheat).